Reading from the N-terminus, the 206-residue chain is Nucleoside triphosphate pyrophosphatase (206 aa).

Catalysis depends on Asp76, which acts as the Proton acceptor.

It belongs to the Maf family. A divalent metal cation serves as cofactor.

The protein resides in the cytoplasm. It catalyses the reaction a ribonucleoside 5'-triphosphate + H2O = a ribonucleoside 5'-phosphate + diphosphate + H(+). The enzyme catalyses a 2'-deoxyribonucleoside 5'-triphosphate + H2O = a 2'-deoxyribonucleoside 5'-phosphate + diphosphate + H(+). Nucleoside triphosphate pyrophosphatase. May have a dual role in cell division arrest and in preventing the incorporation of modified nucleotides into cellular nucleic acids. The polypeptide is Nucleoside triphosphate pyrophosphatase (Streptomyces coelicolor (strain ATCC BAA-471 / A3(2) / M145)).